Here is a 2614-residue protein sequence, read N- to C-terminus: MSLTLKIQIVRDKQVKAMKFSPTQTVAEVCAQVREKINETSGDDHGLFQPGIDAKRPSRWLKMDKTLQFYDLKINDELDYKKKHRPLKVRLMDETVKTMLVDDSLTAGEILEIIGKRIGIKNYEEFSLQTEGAAAGEWINHAQPLHEQGVPDDAVVLLKKKFFVDDFNVNRDDPIQLHLVYVQSRDAIISGSHPCSYEEAVQFGALQCQIQLGNHNPNLHKPGYLKIKEYFPPSFHKKKDAEKDIYKEFRKLTGMSESNSKFRYVQLCRSLKTYGITFFLTKERVKGQKKPVPKLLGITRDSILRLDAETKEVEHEYPLNHLRRWAASPQSFTLDFGDYEDDYVSVITTEGEAISQLLSGYIEILMKKRKDTGTVIDENETDIANVESVGRIRGQTSQATTSSSLSGYDGNGGREGQYSAPGQAIGYRGGLGGPLSIKVTNIDSASAAVANLLNEMELDPNAVIGQKSSLTPQQWRQQLAIHAKAVAAAAGKLLGNLNNPNGMDKNQMDSNARDVALTIDQLVHAARAASIASGEDPDGEMPLFDGAKAVAESISKLLKATKDLSSNPNDENARNLIAQAADQLKLMTSYLDGACNGVITDSGTLRLLMEAGKAIAIATQDLVNQANVAIQDINDPIRKNQLNMAIDETMKAGIHASAVSQALAATILDPNCRQQFNTAAKTAQDTNNYLLSAAKAAQMDPALLEKLRASAKSIAEAYASLIQSADLAQPKSGDDVEFTSASKTILSAAAQLLGSQGKSDNIMQQAKVIEEAMGHLIAGARRAALKTDDPGVRDRLIQCSKAVAEAVRNLMEIAQDSADNPEDKVLFAKLQESSKRVATAVKQLVGDAGKESAFQLLRTNAKLACAATTGLMNTSRQSMLQGHLSDQESNKLLLACVQAGPAITNLLNSITSSQKAPNDLPAQNQLIEVARVSAPIAYQVVAVAKGAIPHFTDQHSKQEVSNSSNTASDAIRALLDAIGDLTSAVGQQEFDDALDTVQALEADMESSTMLVQAGTTHQIPGQTRENALELLNVAARALGSSAKQVLLQYKTSPEKLGETSKDLATSVSQVTNAAKSVCFTTQNRSVQKAVLGAAKQITTESTNLVSCARAVSSNPGDPSLESALQSSVKAIAEALANLLTTSKGGDPGGKDLDDAIEAIKNDTKRINNPPVNLGGEGGVNSEKAISSSKALVGAVSQVAANARSNPSALGASARTTSTTFTLLVDTINLCTGTIVNKQLAIEIVKGGQLLGIETIKLLQASRFAASRPGEGEGELNQTQQSVSNTVKQLIYNIQSSVPGQAEIADALEIVKQAIIALNSSESSGSRPNALESLTQAAKNLADYTAQVVQSKGNSEKMGTQCKSASESLKDVVEYTKASLSTAEGHPDSIKTLASKVDDSSNALFNSCKKTGQLSDQDKKNAALDAKNLALSVPNLMGAAKKISASLVQSNPEKSKDILLVAQNITIATSKLVNIAKSVASGQSQADVSQLAATKKEVSELISKLLNATNGHDQDATTISIDLDSLSKSEQALLDASRSTANYMSQFMAIGKTISTGTKDPNVHQQFSGAAQNVSSGVQQLLSAINGMKPEQKDLDESIEIIQNAVVDLDSATLNAAIGLLENTAPVGKTAQVCQEELVDISRELATSMKTFLAAPKQDPTNLGQSAKDTANILPKIVNISKQLASLTTNPDIKQTQLLLSKKLADNMLELMISAKSGDVSDSKQAFNASQSIADILTSVKGGVMQSRDCDESIQIIGKSKENLQKPANDTHGKTYQQYRDEMTEIAKQLALGVSQLANSAKSKPEEIGSSSLKIASIIPRLAETARSTAAATNDVAAKKKLIDSTTGIIDATSNIISDAKLASADHKNTQLQQKISNNFKDITTQIANLIAALRAGATADRDIENACNEVNHVTTDLDAASLFAAAGQIDIDTDGHTTQNIQEQVGKLAQDLKDSKNQLAEASGKTIEDVGTSAKATASINQKLAHATKVCAALTSDSTTQQNLLSAARTVSSNLQQTISASKNAQKNPNAGNKAILDKSSQELEESIDSLANLVQSSTTTKGISELEGVSSEIRKQLAAYDSATANVNANATAEDVVNSAKNLAESIAYLVSSCNNSPEDIAEASKGTTLAIKSLLANAKGASVLTDDAVIQQNVTESAKAAAQTVLKLIQAAKQQRNDPSNPAHQNKLSEISSEVVESISTCVNAAEDLPEGKRAKLLFAAGESLEETAEKELKAAAAIIEEATAALLNAKKKREQNRIASGIDEAGIDESILEAARAITSATGVLVQCATNVQHELVLAGKVGNKGNMYRRDPTWARGLISAAQAVAGSVQGLVHSANSSSQGKVDEEQLVASAKGVAAATARLVTASRAKADLNSASNSQLAQAAKQVSNATAALVEAAKQVNEEPEVEFDTTNLSNAQIISKEMDQQIQILKLKKELEQAEKKLFSIRKKEYSDQTGNPSPAKDSDNKPTTSISVGITPTKRTTQASPPSPPLTPTQQAAGTPTLPPRPLMKKPAPSQAPSSPVAPVSAPVSKPSPKPAPKPAAPTAAAPNKTYTLEELKKKPANIDHSNLEIYLSDEEFKAVFNCERSELAAMPTWKRNNIKTKLGLF.

Positions 85–369 constitute an FERM domain; the sequence is RPLKVRLMDE…GYIEILMKKR (285 aa). The segment at 393–421 is disordered; that stretch reads RGQTSQATTSSSLSGYDGNGGREGQYSAP. Residues 395 to 406 are compositionally biased toward low complexity; the sequence is QTSQATTSSSLS. 2 coiled-coil regions span residues 1938–1965 and 2033–2057; these read TQNIQEQVGKLAQDLKDSKNQLAEASGK and NKAILDKSSQELEESIDSLANLVQS. The I/LWEQ domain maps to 2219–2460; sequence LLFAAGESLE…SIRKKEYSDQ (242 aa). The segment at 2454–2557 is disordered; it reads KKEYSDQTGN…AAPTAAAPNK (104 aa). A compositionally biased stretch (polar residues) spans 2473–2487; the sequence is KPTTSISVGITPTKR. Residues 2517–2537 show a composition bias toward low complexity; that stretch reads KKPAPSQAPSSPVAPVSAPVS. The segment covering 2538 to 2548 has biased composition (pro residues); the sequence is KPSPKPAPKPA. Residues 2553 to 2614 form the HP domain; that stretch reads AAPNKTYTLE…NNIKTKLGLF (62 aa).

It is found in the cytoplasm. The protein resides in the cytoskeleton. It localises to the cell cortex. Functionally, actin-binding protein required for multicellular morphogenesis. Substrate of pkgB and/or pkbA. This is Talin-B (talB) from Dictyostelium discoideum (Social amoeba).